The primary structure comprises 156 residues: Transcription antitermination protein NusB (156 aa).

The protein belongs to the NusB family.

In terms of biological role, involved in transcription antitermination. Required for transcription of ribosomal RNA (rRNA) genes. Binds specifically to the boxA antiterminator sequence of the ribosomal RNA (rrn) operons. The chain is Transcription antitermination protein NusB from Xanthomonas oryzae pv. oryzae (strain MAFF 311018).